A 149-amino-acid polypeptide reads, in one-letter code: D-aminoacyl-tRNA deacylase (149 aa).

The Gly-cisPro motif, important for rejection of L-amino acids motif lies at 137–138; it reads GP.

It belongs to the DTD family. As to quaternary structure, homodimer.

It is found in the cytoplasm. The catalysed reaction is glycyl-tRNA(Ala) + H2O = tRNA(Ala) + glycine + H(+). It carries out the reaction a D-aminoacyl-tRNA + H2O = a tRNA + a D-alpha-amino acid + H(+). An aminoacyl-tRNA editing enzyme that deacylates mischarged D-aminoacyl-tRNAs. Also deacylates mischarged glycyl-tRNA(Ala), protecting cells against glycine mischarging by AlaRS. Acts via tRNA-based rather than protein-based catalysis; rejects L-amino acids rather than detecting D-amino acids in the active site. By recycling D-aminoacyl-tRNA to D-amino acids and free tRNA molecules, this enzyme counteracts the toxicity associated with the formation of D-aminoacyl-tRNA entities in vivo and helps enforce protein L-homochirality. The chain is D-aminoacyl-tRNA deacylase from Janthinobacterium sp. (strain Marseille) (Minibacterium massiliensis).